Here is a 121-residue protein sequence, read N- to C-terminus: ATP synthase epsilon chain (121 aa).

The protein belongs to the ATPase epsilon chain family. F-type ATPases have 2 components, CF(1) - the catalytic core - and CF(0) - the membrane proton channel. CF(1) has five subunits: alpha(3), beta(3), gamma(1), delta(1), epsilon(1). CF(0) has three main subunits: a, b and c.

It is found in the cell membrane. Functionally, produces ATP from ADP in the presence of a proton gradient across the membrane. In Mycolicibacterium smegmatis (strain ATCC 700084 / mc(2)155) (Mycobacterium smegmatis), this protein is ATP synthase epsilon chain.